A 127-amino-acid chain; its full sequence is Small ribosomal subunit protein bS6 (127 aa).

Residues 102–127 are disordered; sequence IMQGAEKGKSSRKEKVDAEAEASEEA. Positions 107-119 are enriched in basic and acidic residues; the sequence is EKGKSSRKEKVDA.

The protein belongs to the bacterial ribosomal protein bS6 family.

In terms of biological role, binds together with bS18 to 16S ribosomal RNA. The sequence is that of Small ribosomal subunit protein bS6 from Coxiella burnetii (strain CbuK_Q154) (Coxiella burnetii (strain Q154)).